Consider the following 329-residue polypeptide: Ribosome biogenesis regulatory protein homolog (329 aa).

Disordered stretches follow at residues 227 to 248 (KANIKTGKKRKFESNEAPVSAE) and 262 to 329 (KKAK…NKRK). Residues 278–295 (LREKKEKQEKKGAKEATR) show a composition bias toward basic and acidic residues. The segment covering 320 to 329 (AKKKGANKRK) has biased composition (basic residues).

The protein belongs to the RRS1 family.

The protein localises to the nucleus. The protein resides in the nucleolus. Involved in ribosomal large subunit assembly. This is Ribosome biogenesis regulatory protein homolog from Caenorhabditis briggsae.